The primary structure comprises 126 residues: Ribosome-binding factor A (126 aa).

Belongs to the RbfA family. In terms of assembly, monomer. Binds 30S ribosomal subunits, but not 50S ribosomal subunits or 70S ribosomes.

The protein resides in the cytoplasm. One of several proteins that assist in the late maturation steps of the functional core of the 30S ribosomal subunit. Associates with free 30S ribosomal subunits (but not with 30S subunits that are part of 70S ribosomes or polysomes). Required for efficient processing of 16S rRNA. May interact with the 5'-terminal helix region of 16S rRNA. This Haemophilus ducreyi (strain 35000HP / ATCC 700724) protein is Ribosome-binding factor A.